Consider the following 176-residue polypeptide: MRRDIPQDTVRRNEQVRAREVRVIGADGEQLGILSRNDAIAHAKELGLDLVEVAATADPPVCRVMDYGRFKYEQQKKKAEAKKNQTVIQIKEIKVRPKTDDHDYDTKVRHIRRFIEEGDRCKVTVFFRGREIVHKDRGQSILDRIVEDTKDIAKMDQEARAEGRTLFMMLAPLPKK.

The protein belongs to the IF-3 family. As to quaternary structure, monomer.

The protein localises to the cytoplasm. IF-3 binds to the 30S ribosomal subunit and shifts the equilibrium between 70S ribosomes and their 50S and 30S subunits in favor of the free subunits, thus enhancing the availability of 30S subunits on which protein synthesis initiation begins. This is Translation initiation factor IF-3 from Nitratidesulfovibrio vulgaris (strain DSM 19637 / Miyazaki F) (Desulfovibrio vulgaris).